Reading from the N-terminus, the 479-residue chain is Probable glycine dehydrogenase (decarboxylating) subunit 2 (479 aa).

Residue Lys265 is modified to N6-(pyridoxal phosphate)lysine.

It belongs to the GcvP family. C-terminal subunit subfamily. The glycine cleavage system is composed of four proteins: P, T, L and H. In this organism, the P 'protein' is a heterodimer of two subunits. Requires pyridoxal 5'-phosphate as cofactor.

The enzyme catalyses N(6)-[(R)-lipoyl]-L-lysyl-[glycine-cleavage complex H protein] + glycine + H(+) = N(6)-[(R)-S(8)-aminomethyldihydrolipoyl]-L-lysyl-[glycine-cleavage complex H protein] + CO2. In terms of biological role, the glycine cleavage system catalyzes the degradation of glycine. The P protein binds the alpha-amino group of glycine through its pyridoxal phosphate cofactor; CO(2) is released and the remaining methylamine moiety is then transferred to the lipoamide cofactor of the H protein. This is Probable glycine dehydrogenase (decarboxylating) subunit 2 from Pseudothermotoga lettingae (strain ATCC BAA-301 / DSM 14385 / NBRC 107922 / TMO) (Thermotoga lettingae).